The sequence spans 143 residues: MFLGTHSPRLDEKGRMFLPAKYRDELAGGLVVTKGQERCLYVFPIREFERITQVLRAAPVTAKAVRDYSRVFFASASNELPDRQGRVTIPANLRAYAGLNRDCVVIGANTRLEIWDAQTWADYEAEQEQVFAELAEEVLPGVL.

2 SpoVT-AbrB domains span residues 5–47 (THSP…PIRE) and 76–119 (ASNE…DAQT).

The protein belongs to the MraZ family. Forms oligomers.

The protein resides in the cytoplasm. It is found in the nucleoid. The polypeptide is Transcriptional regulator MraZ (Thermobifida fusca (strain YX)).